Reading from the N-terminus, the 304-residue chain is Sperm microtubule inner protein 6 (304 aa).

This sequence belongs to the SPMIP6 family. In terms of assembly, microtubule inner protein component of sperm flagellar doublet microtubules. Interacts with alpha-tubulin.

Its subcellular location is the cytoplasm. The protein resides in the cytoskeleton. It localises to the nucleus. It is found in the mitochondrion. The protein localises to the flagellum axoneme. In terms of biological role, may participate in intramanchette transport and midpiece formation of the sperm tail. May play a potential role in somatic cell proliferation. This is Sperm microtubule inner protein 6 (SPMIP6) from Bos taurus (Bovine).